The primary structure comprises 156 residues: Small ribosomal subunit protein uS7 (156 aa).

The protein belongs to the universal ribosomal protein uS7 family. As to quaternary structure, part of the 30S ribosomal subunit. Contacts proteins S9 and S11.

In terms of biological role, one of the primary rRNA binding proteins, it binds directly to 16S rRNA where it nucleates assembly of the head domain of the 30S subunit. Is located at the subunit interface close to the decoding center, probably blocks exit of the E-site tRNA. In Rhizobium meliloti (strain 1021) (Ensifer meliloti), this protein is Small ribosomal subunit protein uS7.